The following is a 445-amino-acid chain: Putative H/ACA ribonucleoprotein complex subunit 4 (445 aa).

Residues 1–32 form a disordered region; it reads MGKKDKRSKLEGDELAEAQQKGSFQLPSSNET. A compositionally biased stretch (polar residues) spans 20–32; sequence QKGSFQLPSSNET. Asp113 serves as the catalytic Nucleophile. The region spanning 284–359 is the PUA domain; it reads HKRVVVKDSC…IVAKSKRVIM (76 aa). Positions 407–445 are disordered; sequence TDKVKKEQEDKEDEEEEEAPKKKSKKAAKKEVSSSSDSE.

It belongs to the pseudouridine synthase TruB family. As to quaternary structure, component of the small nucleolar ribonucleoprotein particle containing H/ACA-type snoRNAs (H/ACA snoRNPs).

It localises to the nucleus. The protein resides in the nucleolus. It catalyses the reaction a uridine in RNA = a pseudouridine in RNA. Its function is as follows. Plays a central role in ribosomal RNA processing. Probable catalytic subunit of H/ACA small nucleolar ribonucleoprotein (H/ACA snoRNP) complex, which catalyzes pseudouridylation of rRNA. This involves the isomerization of uridine such that the ribose is subsequently attached to C5, instead of the normal N1. Pseudouridine ('psi') residues may serve to stabilize the conformation of rRNAs. In Caenorhabditis briggsae, this protein is Putative H/ACA ribonucleoprotein complex subunit 4.